A 108-amino-acid polypeptide reads, in one-letter code: uncharacterized protein (108 aa).

The 100-residue stretch at 7-106 (CPRFEKAVDI…WATEWIDPSF (100 aa)) folds into the HTH hxlR-type domain.

This is an uncharacterized protein from Bacillus subtilis (strain 168).